Here is a 201-residue protein sequence, read N- to C-terminus: Recombination protein RecR (201 aa).

The segment at 59–74 adopts a C4-type zinc-finger fold; the sequence is CKICGNIDTENICRIC. The Toprim domain maps to 82 to 177; the sequence is SIIAIVETVA…KISRLASGIP (96 aa).

The protein belongs to the RecR family.

In terms of biological role, may play a role in DNA repair. It seems to be involved in an RecBC-independent recombinational process of DNA repair. It may act with RecF and RecO. The protein is Recombination protein RecR of Rickettsia massiliae (strain Mtu5).